A 482-amino-acid polypeptide reads, in one-letter code: Anthranilate synthase component 1 (482 aa).

L-tryptophan is bound by residues Ser-47 and Pro-267–Met-269. Position 302–303 (Gly-302–Thr-303) interacts with chorismate. Glu-329 lines the Mg(2+) pocket. Chorismate-binding positions include Tyr-417, Arg-437, Gly-451 to Gly-453, and Gly-453. Glu-466 contributes to the Mg(2+) binding site.

The protein belongs to the anthranilate synthase component I family. In terms of assembly, heterotetramer consisting of two non-identical subunits: a beta subunit (TrpG) and a large alpha subunit (TrpE). Mg(2+) serves as cofactor.

It catalyses the reaction chorismate + L-glutamine = anthranilate + pyruvate + L-glutamate + H(+). It functions in the pathway amino-acid biosynthesis; L-tryptophan biosynthesis; L-tryptophan from chorismate: step 1/5. Its activity is regulated as follows. Feedback inhibited by tryptophan. Part of a heterotetrameric complex that catalyzes the two-step biosynthesis of anthranilate, an intermediate in the biosynthesis of L-tryptophan. In the first step, the glutamine-binding beta subunit (TrpG) of anthranilate synthase (AS) provides the glutamine amidotransferase activity which generates ammonia as a substrate that, along with chorismate, is used in the second step, catalyzed by the large alpha subunit of AS (TrpE) to produce anthranilate. In the absence of TrpG, TrpE can synthesize anthranilate directly from chorismate and high concentrations of ammonia. In Spirochaeta aurantia, this protein is Anthranilate synthase component 1 (trpE).